The chain runs to 152 residues: UPF0756 membrane protein CA_C0092 (152 aa).

4 helical membrane passes run 5–25, 50–70, 82–102, and 117–137; these read IILV…VAIS, MFWG…QGNV, FVGI…GVGL, and LILG…GPLI.

Belongs to the UPF0756 family.

It localises to the cell membrane. This is UPF0756 membrane protein CA_C0092 from Clostridium acetobutylicum (strain ATCC 824 / DSM 792 / JCM 1419 / IAM 19013 / LMG 5710 / NBRC 13948 / NRRL B-527 / VKM B-1787 / 2291 / W).